A 139-amino-acid chain; its full sequence is Large ribosomal subunit protein uL22c (139 aa).

This sequence belongs to the universal ribosomal protein uL22 family. Part of the 50S ribosomal subunit.

Its subcellular location is the plastid. It is found in the chloroplast. This protein binds specifically to 23S rRNA. In terms of biological role, the globular domain of the protein is located near the polypeptide exit tunnel on the outside of the subunit, while an extended beta-hairpin is found that lines the wall of the exit tunnel in the center of the 70S ribosome. The chain is Large ribosomal subunit protein uL22c (rpl22) from Cycas taitungensis (Prince sago).